The sequence spans 513 residues: Sphingosine-1-phosphate transporter SPNS2 (513 aa).

11 helical membrane-spanning segments follow: residues 102–122, 130–150, 163–183, 190–210, 222–242, 276–296, 320–340, 354–374, 378–398, 422–442, and 463–483; these read GLLQ…FGYL, VILS…SFIP, LVGI…GDLF, LMLS…YITG, WALR…LIFV, LATS…PLYL, LIFG…GAGA, LVCA…FVAA, IIAA…NWAI, TSHL…SDLI, and LCPF…LFFL.

It belongs to the major facilitator superfamily. Spinster (TC 2.A.1.49) family.

The protein localises to the cell membrane. Its subcellular location is the endosome membrane. It carries out the reaction sphing-4-enine 1-phosphate(in) = sphing-4-enine 1-phosphate(out). It catalyses the reaction sphinganine 1-phosphate(in) = sphinganine 1-phosphate(out). Its function is as follows. Lipid transporter that specifically mediates export of sphingosine-1-phosphate (sphing-4-enine 1-phosphate, S1P) and sphinganine-1-phosphate. The protein is Sphingosine-1-phosphate transporter SPNS2 (spns2) of Xenopus tropicalis (Western clawed frog).